The primary structure comprises 471 residues: Collagenase 3 (471 aa).

The first 19 residues, 1–19 (MQPGVLAACLLLSWTHCWS), serve as a signal peptide directing secretion. Residues 20-103 (LPLLNSNEDD…PRCGVPDVGE (84 aa)) constitute a propeptide, activation peptide. The Cysteine switch signature appears at 94 to 101 (PRCGVPDV). Cysteine 96 serves as a coordination point for Zn(2+). The N-linked (GlcNAc...) asparagine glycan is linked to asparagine 117. Residue aspartate 128 participates in Ca(2+) binding. Asparagine 152 and asparagine 158 each carry an N-linked (GlcNAc...) asparagine glycan. Ca(2+) is bound at residue aspartate 162. Zn(2+) is bound by residues histidine 172 and aspartate 174. Residues 176-246 (YPFDGPSGLL…GALMFPIYTY (71 aa)) are interaction with TIMP2. Ca(2+) contacts are provided by aspartate 179, glycine 180, serine 182, and leucine 184. Residue histidine 187 coordinates Zn(2+). Ca(2+)-binding residues include asparagine 194, glycine 196, and aspartate 198. Residue histidine 200 coordinates Zn(2+). Ca(2+) contacts are provided by aspartate 202, aspartate 203, and glutamate 205. A Zn(2+)-binding site is contributed by histidine 222. Glutamate 223 is a catalytic residue. 3 residues coordinate Zn(2+): histidine 226, histidine 232, and methionine 240. The tract at residues 263-284 (QSLYGPGDEDPNPKHPKTPDKC) is disordered. The segment at 268 to 471 (PGDEDPNPKH…VMPTNSLLWC (204 aa)) is interaction with collagen. The segment covering 273-284 (PNPKHPKTPDKC) has biased composition (basic and acidic residues). 4 Hemopexin repeats span residues 281–330 (PDKC…WPEL), 331–377 (PNRI…GFPR), 379–427 (VKKI…FPGI), and 428–471 (GGKV…LLWC). A disulfide bond links cysteine 284 and cysteine 471. 4 residues coordinate Ca(2+): aspartate 291, isoleucine 293, aspartate 335, and alanine 337. At tyrosine 366 the chain carries Phosphotyrosine; by PKDCC. Residues serine 383 and alanine 385 each contribute to the Ca(2+) site. N-linked (GlcNAc...) asparagine glycosylation is present at asparagine 409. Residues aspartate 432 and valine 434 each contribute to the Ca(2+) site.

The protein belongs to the peptidase M10A family. Ca(2+) is required as a cofactor. It depends on Zn(2+) as a cofactor. In terms of processing, the proenzyme is activated by removal of the propeptide; this cleavage can be effected by other matrix metalloproteinases, such as MMP2, MMP3 and MMP14 and may involve several cleavage steps. Cleavage can also be autocatalytic, after partial maturation by another protease or after treatment with 4-aminophenylmercuric acetate (APMA) (in vitro). N-glycosylated. Post-translationally, tyrosine phosphorylated by PKDCC/VLK.

Its subcellular location is the secreted. The protein localises to the extracellular space. It localises to the extracellular matrix. Plays a role in the degradation of extracellular matrix proteins including fibrillar collagen, fibronectin, TNC and ACAN. Cleaves triple helical collagens, including type I, type II and type III collagen, but has the highest activity with soluble type II collagen. Can also degrade collagen type IV, type XIV and type X. May also function by activating or degrading key regulatory proteins, such as TGFB1 and CCN2. Plays a role in wound healing, tissue remodeling, cartilage degradation, bone development, bone mineralization and ossification. Required for normal embryonic bone development and ossification. Plays a role in the healing of bone fractures via endochondral ossification. Plays a role in wound healing, probably by a mechanism that involves proteolytic activation of TGFB1 and degradation of CCN2. Plays a role in keratinocyte migration during wound healing. May play a role in cell migration and in tumor cell invasion. The polypeptide is Collagenase 3 (MMP13) (Oryctolagus cuniculus (Rabbit)).